A 222-amino-acid polypeptide reads, in one-letter code: Methionine import system permease protein MetP (222 aa).

Residues 18 to 212 (TYETLYMTLI…IIVFIIQIIG (195 aa)) enclose the ABC transmembrane type-1 domain. Transmembrane regions (helical) follow at residues 25–45 (TLIS…LLFL), 73–93 (FLIL…TILG), 97–117 (ALPA…EIAL), 152–172 (ISGI…AGAI), and 195–215 (FVAT…GDLI).

This sequence belongs to the binding-protein-dependent transport system permease family. CysTW subfamily. The complex is composed of two ATP-binding proteins (MetN), two transmembrane proteins (MetP) and a solute-binding protein (MetQ).

Its subcellular location is the cell membrane. Its function is as follows. Part of the ABC transporter complex MetNPQ involved in methionine import. Responsible for the translocation of the substrate across the membrane. It has also been shown to be involved in methionine sulfoxide transport. The chain is Methionine import system permease protein MetP (metP) from Bacillus subtilis (strain 168).